A 318-amino-acid polypeptide reads, in one-letter code: Homeobox protein Nkx-2.5 (318 aa).

The segment at residues 137–196 (RRKPRVLFSQAQVYELERRFKQQRYLSAPERDQLASVLKLTSTQVKIWFQNRRYKCKRQR) is a DNA-binding region (homeobox).

This sequence belongs to the NK-2 homeobox family. Homodimer (via the homeobox); binds DNA as homodimer. Interacts (via the homeobox) with TBX5 (via the T-box); this complex binds DNA. Interacts with HIPK1 and HIPK2, but not HIPK3. Interacts with the C-terminal zinc finger of GATA4 through its homeobox domain. Also interacts with JARID2 which represses its ability to activate transcription of ANF. Interacts with FBLIM1. Interacts with TBX18. Interacts with histone methyltransferase NSD2 (via HMG box). Interacts with NEDD9. Interacts with TBX1. In terms of tissue distribution, predominantly in the adult and embryonic heart, and to a lesser extent in lingual muscle, spleen and stomach.

The protein resides in the nucleus. Functionally, transcription factor required for the development of the heart and the spleen. During heart development, acts as a transcriptional activator of NPPA/ANF in cooperation with GATA4. May cooperate with TBX2 to negatively modulate expression of NPPA/ANF in the atrioventricular canal. Binds to the core DNA motif of NPPA promoter. Together with PBX1, required for spleen development through a mechanism that involves CDKN2B repression. Positively regulates transcription of genes such as COL3A1 and MMP2, resulting in increased pulmonary endothelial fibrosis in response to hypoxia. This is Homeobox protein Nkx-2.5 (Nkx2-5) from Mus musculus (Mouse).